A 274-amino-acid polypeptide reads, in one-letter code: tRNA pseudouridine synthase A (274 aa).

The active-site Nucleophile is Asp60. Residue Tyr118 coordinates substrate.

The protein belongs to the tRNA pseudouridine synthase TruA family. As to quaternary structure, homodimer.

It carries out the reaction uridine(38/39/40) in tRNA = pseudouridine(38/39/40) in tRNA. Its function is as follows. Formation of pseudouridine at positions 38, 39 and 40 in the anticodon stem and loop of transfer RNAs. The chain is tRNA pseudouridine synthase A from Picosynechococcus sp. (strain ATCC 27264 / PCC 7002 / PR-6) (Agmenellum quadruplicatum).